The primary structure comprises 229 residues: Transmembrane emp24 domain-containing protein 5 (229 aa).

The N-terminal stretch at 1 to 27 (MGDKIWLPFPVLLLAALPPVLLPGAAG) is a signal peptide. Over 28 to 196 (FTPSLDSDFT…IQESNFDRVN (169 aa)) the chain is Lumenal. Positions 45 to 126 (KECFYQPMPL…EKVIFFELIL (82 aa)) constitute a GOLD domain. Residues 197–217 (FWSMVNLVVMVVVSAIQVYML) traverse the membrane as a helical segment. Over 218–229 (KSLFEDKRKSRT) the chain is Cytoplasmic.

This sequence belongs to the EMP24/GP25L family. As to quaternary structure, interacts with TMED9 and TMED10.

The protein localises to the endoplasmic reticulum membrane. The protein resides in the golgi apparatus. It is found in the cis-Golgi network membrane. Its subcellular location is the endoplasmic reticulum-Golgi intermediate compartment membrane. Functionally, potential role in vesicular protein trafficking, mainly in the early secretory pathway. Required for the maintenance of the Golgi apparatus; involved in protein exchange between Golgi stacks during assembly. Probably not required for COPI-vesicle-mediated retrograde transport. This is Transmembrane emp24 domain-containing protein 5 (TMED5) from Homo sapiens (Human).